A 175-amino-acid polypeptide reads, in one-letter code: Regenerating islet-derived protein 3-alpha (175 aa).

Positions 1–26 (MLPPMALPSVSWMLLSCLMLLSQVQG) are cleaved as a signal peptide. The propeptide occupies 27-37 (EEPQRELPSAR). 3 disulfides stabilise this stretch: Cys-40/Cys-51, Cys-68/Cys-171, and Cys-146/Cys-163. The region spanning 47–172 (YGSHCYALFL…CNVRLPYVCK (126 aa)) is the C-type lectin domain. Zn(2+) contacts are provided by His-50 and His-107. A sufficient to activate EXTL3 region spans residues 103 to 118 (WIGLHDPTQGTEPNGE). Residues 114 to 116 (EPN) carry the EPN motif. Glu-121 and His-145 together coordinate Zn(2+).

As to quaternary structure, forms a hexameric membrane-permeabilizing oligomeric pore on membrane phospholipids. The hexamer is formed by three dimers related by helical symmetry. Forms filaments, filamentation traps pore complexes and limits damage to host cells. Interacts with EXTL3. In terms of processing, proteolytic processing by trypsin removes an inhibitory N-terminal propeptide and is essential for peptidoglycan binding and antibacterial activity. Expressed by keratinocytes. Highly expressed in epidermal keratinocytes of psoriasis patients (at protein level). Constitutively expressed in intestine. Low expression is found in healthy pancreas. Overexpressed during the acute phase of pancreatitis and in some patients with chronic pancreatitis.

Its subcellular location is the secreted. Lipopolysaccharide inhibits pore-forming activity, explaining why is bactericidal for Gram-positive but not Gram-negative bacteria. Functionally, bactericidal C-type lectin which acts exclusively against Gram-positive bacteria and mediates bacterial killing by binding to surface-exposed carbohydrate moieties of peptidoglycan. Binds membrane phospholipids and kills bacteria by forming a hexameric membrane-permeabilizing oligomeric pore. In terms of biological role, acts as a hormone in response to different stimuli like anti-inflammatory signals, such as IL17A, or gut microbiome. Secreted by different cell types to activate its receptor EXTL3 and induce cell specific signaling pathways. Induced by IL17A in keratinocytes, regulates keratinocyte proliferation and differentiation after skin injury via activation of EXTL3-PI3K-AKT signaling pathway. In parallel, inhibits skin inflammation through the inhibition of inflammatory cytokines such as IL6 and TNF. In pancreas, is able to permealize beta-cells membrane and stimulate their proliferation. Its function is as follows. Has bacteriostatic activity. This chain is Regenerating islet-derived protein 3-alpha, found in Homo sapiens (Human).